Reading from the N-terminus, the 1674-residue chain is Maestro heat-like repeat-containing protein family member 2A (1674 aa).

The disordered stretch occupies residues 1–26 (MTEAITEAAVASSEEVSEERDDLGPL). HEAT repeat units lie at residues 73 to 96 (ATTEPSVVINTLIRCLQVPEISTQ), 97 to 133 (RKVNIYNILQDIIQQEGELEEQCVQRLVAIASKEMRE), 195 to 234 (MPYMGITLATIFTMLRLANEAKIRQAICSAMETFCETVQF), 254 to 292 (LKVFPMYRYFVTVWLRHYNPEVKLGVIKSLKPMLGLLLP), 382 to 419 (SYPKELMKFFFSQMETNKEAVRVGTLNLIRAIVSADEP), 424 to 461 (RAIYLAIRVVKNTISDTRSKVRMAILHIIGQLALCGYQ), 573 to 612 (PAPQKLLARLLVLMSSPYKGEGRGIAMLNLLRTLSQSIAP), 615 to 641 (ADMWELEIALLVRYLEEHTEFTWDQKA), 642 to 679 (WEDKLIQFLRNSLKKTRGSSWSLRLSKELNNQIASFDS), 739 to 776 (KTVLNVLHDFEERIQESEQSWQISAWRKDHPWRRETVK), 993 to 1030 (GQFGTMVGLIAPCTCDAHQRTRMASMNVLSSLLDLHAS), 1221 to 1263 (DPLM…SHRP), 1381 to 1420 (EKLLKPAALLLEKGADQEEDEALRVLSLRALGNMALGAPK), and 1627 to 1674 (LDFP…QGMS).

This is Maestro heat-like repeat-containing protein family member 2A (MROH2A) from Homo sapiens (Human).